A 257-amino-acid polypeptide reads, in one-letter code: Neurotrophin-3 (257 aa).

The signal sequence occupies residues 1-18 (MSILFYMIFLAYLRGIQG). A propeptide spanning residues 19-138 (NSMDQRRLPE…VANRTARRKR (120 aa)) is cleaved from the precursor. Residues 61–81 (STLPKAEAPREPERGEPAKSE) are disordered. Basic and acidic residues predominate over residues 67 to 79 (EAPREPERGEPAK). N-linked (GlcNAc...) asparagine glycosylation is present at N131. Disulfide bonds link C152/C217, C195/C246, and C205/C248.

Belongs to the NGF-beta family.

The protein localises to the secreted. Its function is as follows. Seems to promote the survival of visceral and proprioceptive sensory neurons. In Sus scrofa (Pig), this protein is Neurotrophin-3 (NTF3).